The chain runs to 1001 residues: RNA-binding protein 12B (1001 aa).

Phosphoserine occurs at positions 98, 101, and 112. Residue lysine 114 forms a Glycyl lysine isopeptide (Lys-Gly) (interchain with G-Cter in SUMO2) linkage. Residues asparagine 119–glutamine 128 show a composition bias toward polar residues. The tract at residues asparagine 119 to threonine 147 is disordered. Residue lysine 151 forms a Glycyl lysine isopeptide (Lys-Gly) (interchain with G-Cter in SUMO2) linkage. The RRM 1 domain occupies proline 155–glutamate 230. The segment covering leucine 247 to arginine 262 has biased composition (basic and acidic residues). The interval leucine 247–serine 278 is disordered. 2 positions are modified to phosphoserine: serine 250 and serine 254. Residues histidine 263–serine 278 are compositionally biased toward basic residues. Position 276 is a phosphothreonine (threonine 276). A phosphoserine mark is found at serine 278, serine 280, serine 292, and serine 294. Residues phenylalanine 284–arginine 360 enclose the RRM 2 domain. Position 319 is an N6-acetyllysine (lysine 319). Residue lysine 335 forms a Glycyl lysine isopeptide (Lys-Gly) (interchain with G-Cter in SUMO2) linkage. Residue serine 377 is modified to Phosphoserine. The RRM 3 domain maps to leucine 400–glutamate 477. Glycyl lysine isopeptide (Lys-Gly) (interchain with G-Cter in SUMO2) cross-links involve residues lysine 514 and lysine 541. The tract at residues glutamine 544–phenylalanine 587 is disordered. Phosphoserine is present on residues serine 575, serine 591, and serine 638. Residues leucine 631–serine 881 show a composition bias toward basic and acidic residues. Residues leucine 631–histidine 882 form a disordered region. A Phosphothreonine modification is found at threonine 640. Phosphoserine is present on residues serine 710 and serine 718. A Glycyl lysine isopeptide (Lys-Gly) (interchain with G-Cter in SUMO2) cross-link involves residue lysine 895. The region spanning threonine 925–leucine 1001 is the RRM 4 domain.

This is RNA-binding protein 12B (RBM12B) from Homo sapiens (Human).